A 279-amino-acid chain; its full sequence is MPTTGNYFHLHLVSDSTGETLITVARAVAAQYANVTPVEHVYPLVRSQKQLDRVLDEIEEAPGIVLFTLLEKDLVSRLEAKCQQINIPSLSIIGPVMQLFEAYLGASTAGRVGAQHVLNAEYFARIDALNYTMLHDDGQMVDGLEDADVVLVGVSRTSKTPTSIYLANRGVRTANVPLVPGIPIPHQLEVLKKPLVVSLHATPERLIQVRQNRLLSMGAESGNENYVDKQSVTDEVAYARKLSAKFNWVMLDVTRRSIEETAAAILKLYSDRQRQRLPE.

153–160 (GVSRTSKT) contributes to the ADP binding site.

The protein belongs to the pyruvate, phosphate/water dikinase regulatory protein family. PDRP subfamily.

It catalyses the reaction N(tele)-phospho-L-histidyl/L-threonyl-[pyruvate, phosphate dikinase] + ADP = N(tele)-phospho-L-histidyl/O-phospho-L-threonyl-[pyruvate, phosphate dikinase] + AMP + H(+). The catalysed reaction is N(tele)-phospho-L-histidyl/O-phospho-L-threonyl-[pyruvate, phosphate dikinase] + phosphate + H(+) = N(tele)-phospho-L-histidyl/L-threonyl-[pyruvate, phosphate dikinase] + diphosphate. Its function is as follows. Bifunctional serine/threonine kinase and phosphorylase involved in the regulation of the pyruvate, phosphate dikinase (PPDK) by catalyzing its phosphorylation/dephosphorylation. In Bradyrhizobium sp. (strain ORS 278), this protein is Putative pyruvate, phosphate dikinase regulatory protein.